The primary structure comprises 98 residues: U-scoloptoxin(16)-Er9a (98 aa).

The signal sequence occupies residues 1–24 (MVSYLCMSVSSGWLSIGKIAIKDG).

Belongs to the scoloptoxin-16 family. Post-translationally, contains 4 disulfide bonds. As to expression, expressed by the venom gland.

The protein localises to the secreted. The polypeptide is U-scoloptoxin(16)-Er9a (Ethmostigmus rubripes (Giant centipede)).